The sequence spans 279 residues: HTH-type transcriptional regulator HdfR (279 aa).

The HTH lysR-type domain maps to 1-58; that stretch reads MDTELLKTFLEVSRTRHFGRAAESLYLTQSAVSFRIRQLENQLGVNLFTRHRNNIRLT. A DNA-binding region (H-T-H motif) is located at residues 18 to 37; the sequence is FGRAAESLYLTQSAVSFRIR.

This sequence belongs to the LysR transcriptional regulatory family.

In terms of biological role, negatively regulates the transcription of the flagellar master operon flhDC by binding to the upstream region of the operon. The polypeptide is HTH-type transcriptional regulator HdfR (Escherichia coli (strain ATCC 8739 / DSM 1576 / NBRC 3972 / NCIMB 8545 / WDCM 00012 / Crooks)).